The following is a 448-amino-acid chain: Adenylosuccinate synthetase (448 aa).

Residues 22-28 and 50-52 contribute to the GTP site; these read GDEGKGK and GHT. Catalysis depends on D23, which acts as the Proton acceptor. 2 residues coordinate Mg(2+): D23 and G50. Residues 23 to 26, 48 to 51, T139, R153, Q234, T249, and R321 contribute to the IMP site; these read DEGK and NAGH. Catalysis depends on H51, which acts as the Proton donor. Substrate is bound at residue 317–323; the sequence is SVTGRPR. GTP-binding positions include R323, 349–351, and 431–433; these read KLD and STG.

The protein belongs to the adenylosuccinate synthetase family. Homodimer. It depends on Mg(2+) as a cofactor.

The protein resides in the cytoplasm. It catalyses the reaction IMP + L-aspartate + GTP = N(6)-(1,2-dicarboxyethyl)-AMP + GDP + phosphate + 2 H(+). It participates in purine metabolism; AMP biosynthesis via de novo pathway; AMP from IMP: step 1/2. Its function is as follows. Plays an important role in the de novo pathway of purine nucleotide biosynthesis. Catalyzes the first committed step in the biosynthesis of AMP from IMP. The polypeptide is Adenylosuccinate synthetase (Burkholderia thailandensis (strain ATCC 700388 / DSM 13276 / CCUG 48851 / CIP 106301 / E264)).